Here is a 207-residue protein sequence, read N- to C-terminus: MGGGSRFQEPVRMSRRKQVTKEKEEDENFKSPNLEAERRRREKLHCRLMALRSHVPIVTNMTKASIVEDAITYIGELQNNVKNLLETFHEMEEAPPEIDEEQTDPMIKPEVETSDLNEEMKKLGIEENVQLCKIGERKFWLKIITEKRDGIFTKFMEVMRFLGFEIIDISLTTSNGAILISASVQTQELCDVEQTKDFLLEVMRSNP.

Positions 1 to 38 (MGGGSRFQEPVRMSRRKQVTKEKEEDENFKSPNLEAER) are disordered. In terms of domain architecture, bHLH spans 28–77 (NFKSPNLEAERRRREKLHCRLMALRSHVPIVTNMTKASIVEDAITYIGEL).

Homodimer. As to expression, mostly expressed in anthers, and, to a lower extent, in young inflorescences undergoing meiosis and siliques.

It localises to the nucleus. Functionally, transcription factor. Involved in the control of tapetum development. Required for male fertility and pollen differentiation, especially during callose deposition. This Arabidopsis thaliana (Mouse-ear cress) protein is Transcription factor DYT1.